Consider the following 326-residue polypeptide: Malate dehydrogenase (326 aa).

Residue 12–18 coordinates NAD(+); sequence GGTGQIA. 2 residues coordinate substrate: R93 and R99. Residues N106, Q113, and 130–132 contribute to the NAD(+) site; that span reads VGN. Substrate contacts are provided by N132 and R163. H188 acts as the Proton acceptor in catalysis.

It belongs to the LDH/MDH superfamily. MDH type 2 family.

It carries out the reaction (S)-malate + NAD(+) = oxaloacetate + NADH + H(+). Catalyzes the reversible oxidation of malate to oxaloacetate. This Chlamydia trachomatis serovar D (strain ATCC VR-885 / DSM 19411 / UW-3/Cx) protein is Malate dehydrogenase.